Here is a 130-residue protein sequence, read N- to C-terminus: Small ribosomal subunit protein uS9 (130 aa).

The protein belongs to the universal ribosomal protein uS9 family.

This is Small ribosomal subunit protein uS9 from Janthinobacterium sp. (strain Marseille) (Minibacterium massiliensis).